The sequence spans 303 residues: MTRTPAAPEKHNRDSASRYKSGSKISTLFAEELVERSAIAGFGRKDLVVFDNACGTGAISSALHRALGDEKTRTWKLTCGDVSEAMVEVSKQKMIEEGWQNAEVEVVDAQNTGLLSDHYTHVFSAFGKMLGTQGNGIMLTSISAFNLFPDDKAAMEECFRVLQSGGTLAVSTWCSTVWATLIQSAIASIPGDLPTPTTEDIFGLYNKNWADESRVRAQFQQAGFTDINVTSVKKEYTVPVQELAEACKISLPHITRKFWTQEQRDSYEAEVPKAVLRILEEEQRGIGLGAMKAEAIIATARKP.

This sequence belongs to the class I-like SAM-binding methyltransferase superfamily. Requires S-adenosyl-L-methionine as cofactor.

Non-reducing polyketide synthase; part of the gene cluster that mediates the biosynthesis of the bicoumarin kotanin. The non-reducing polyketide synthase ktnS first catalyzes the formation of the pentaketidic 4,7-dihydroxy-5-methylcoumarin from acetyl coenzyme A and 4 malonyl coenzyme A molecules. Further O-methylation by ktnB leads to the formation of 7-demethylsiderin. Then, an oxidative phenol coupling catalyzed by the cytochrome P450 monooxygenase ktnC forms the 8,8'-dimer P-orlandin via dimerization the monomeric precursor, 7-demethylsiderin. P-orlandin is subsequently O-methylated in a stepwise fashion to demethylkotanin and kotanin. The function of ktnA within the pathway has not been determined yet. The polypeptide is Methyltransferase ktnA (Aspergillus niger (strain ATCC MYA-4892 / CBS 513.88 / FGSC A1513)).